The sequence spans 309 residues: Probable manganese-dependent inorganic pyrophosphatase (309 aa).

Mn(2+) contacts are provided by H9, D13, D15, D75, H97, and D149.

The protein belongs to the PPase class C family. The cofactor is Mn(2+).

It is found in the cytoplasm. It carries out the reaction diphosphate + H2O = 2 phosphate + H(+). This chain is Probable manganese-dependent inorganic pyrophosphatase, found in Exiguobacterium sp. (strain ATCC BAA-1283 / AT1b).